Consider the following 430-residue polypeptide: Tektin-2 (430 aa).

2 coiled-coil regions span residues 75–162 (KETL…FQHL) and 226–380 (KNRA…IACK).

It belongs to the tektin family. Microtubule inner protein component of sperm flagellar doublet microtubules. May interact with CCDC172. In terms of processing, ubiquitinated, leading to its degradation. Deubiquitinated by USP16, promoting its stability. Post-translationally, tyrosine phosphorylated. As to expression, expressed in the testes (at protein level).

The protein resides in the cytoplasm. The protein localises to the cytoskeleton. It localises to the cilium axoneme. It is found in the flagellum axoneme. Its subcellular location is the microtubule organizing center. Microtubule inner protein (MIP) part of the dynein-decorated doublet microtubules (DMTs) in cilia and flagellar axoneme. Plays a key role in the assembly or attachment of the inner dynein arm to microtubules in sperm flagella and tracheal cilia. Forms filamentous polymers in the walls of ciliary and flagellar microtubules. This Mus musculus (Mouse) protein is Tektin-2 (Tekt2).